The sequence spans 404 residues: Argininosuccinate synthase (404 aa).

ATP is bound by residues 10–18 (AYSGGVDTS) and alanine 38. Tyrosine 89 contacts L-citrulline. Glycine 119 contacts ATP. Threonine 121, asparagine 125, and aspartate 126 together coordinate L-aspartate. Residue asparagine 125 participates in L-citrulline binding. The L-citrulline site is built by arginine 129, serine 177, serine 186, glutamate 262, and tyrosine 274.

Belongs to the argininosuccinate synthase family. Type 1 subfamily. Homotetramer.

Its subcellular location is the cytoplasm. It catalyses the reaction L-citrulline + L-aspartate + ATP = 2-(N(omega)-L-arginino)succinate + AMP + diphosphate + H(+). It participates in amino-acid biosynthesis; L-arginine biosynthesis; L-arginine from L-ornithine and carbamoyl phosphate: step 2/3. The protein is Argininosuccinate synthase of Prochlorococcus marinus (strain AS9601).